Here is an 8525-residue protein sequence, read N- to C-terminus: MADDEDYEEVVEYYTEEVVYEEVPGETITKIYETTTTRTSDYEQSETSKPALAQPALAQPASAKPVERRKVIRKKVDPSKFMTPYIAHSQKMQDLFSPNKYKEKFEKTKGQPYASTTDTPELRRIKKVQDQLSEVKYRMDGDVAKTICHVDEKAKDIEHAKKVSQQVSKVLYKQNWEDTKDKYLLPPDAPELVQAVKNTAMFSKKLYTEDWEADKSLFYPYNDSPELRRVAQAQKALSDVAYKKGLAEQQAQFTPLADPPDIEFAKKVTNQVSKQKYKEDYENKIKGKWSETPCFEVANARMNADNISTRKYQEDFENMKDQIYFMQTETPEYKMNKKAGVAASKVKYKEDYEKNKGKADYNVLPASENPQLRQLKAAGDALSDKLYKENYEKTKAKSINYCETPKFKLDTVLQNFSSDKKYKDSYLKDILGHYVGSFEDPYHSHCMKVTAQNSDKNYKAEYEEDRGKGFFPQTITQEYEAIKKLDQCKDHTYKVHPDKTKFTQVTDSPVLLQAQVNSKQLSDLNYKAKHESEKFKCHIPPDTPAFIQHKVNAYNLSDNLYKQDWEKSKAKKFDIKVDAIPLLAAKANTKNTSDVMYKKDYEKNKGKMIGVLSINDDPKMLHSLKVAKNQSDRLYKENYEKTKAKSMNYCETPKYQLDTQLKNFSEARYKDLYVKDVLGHYVGSMEDPYHTHCMKVAAQNSDKSYKAEYEEDKGKCYFPQTITQEYEAIKKLDQCKDHTYKVHPDKTKFTAVTDSPVLLQAQLNTKQLSDLNYKAKHEGEKFKCHIPADAPQFIQHRVNAYNLSDNVYKQDWEKSKAKKFDIKVDAIPLLAAKANTKNTSDVMYKKDYEKSKGKMIGALSINDDPKMLHSLKTAKNQSDREYRKDYEKSKTIYTAPLDMLQVTQAKKSQAIASDVDYKHILHSYSYPPDSINVDLAKKAYALQSDVEYKADYNSWMKGCGWVPFGSLEMEKAKRASDILNEKKYRQHPDTLKFTSIEDAPITVQSKINQAQRSDIAYKAKGEEIIHKYNLPPDLPQFIQAKVNAYNISENMYKADLKDLSKKGYDLRTDAIPIRAAKAARQAASDVQYKKDYEKAKGKMVGFQSLQDDPKLVHYMNVAKIQSDREYKKDYEKTKSKYNTPHDMFNVVAAKKAQDVVSNVNYKHSLHHYTYLPDAMDLELSKNMMQIQSDNVYKEDYNNWMKGIGWIPIGSLDVEKVKKAGDALNEKKYRQHPDTLKFTSIVDSPVMVQAKQNTKQVSDILYKAKGEDVKHKYTMSPDLPQFLQAKCNAYNISDVCYKRDWYDLIAKGNNVLGDAIPITAAKASRNIASDYKYKEAYEKSKGKHVGFRSLQDDPKLVHYMNVAKLQSDREYKKNYENTKTSYHTPGDMVSITAAKMAQDVATNVNYKQPLHHYTYLPDAMSLEHTRNVNQIQSDNVYKDEYNSFLKGIGWIPIGSLEVEKVKKAGDALNERKYRQHPDTVKFTSVPDSMGMVLAQHNTKQLSDLNYKVEGEKLKHKYTIDPELPQFIQAKVNALNMSDAHYKADWKKTIAKGYDLRPDAIPIVAAKSSRNIASDCKYKEAYEKAKGKQVGFLSLQDDPKLVHYMNVAKIQSDREYKKGYEASKTKYHTPLDMVSVTAAKKSQEVATNANYRQSYHHYTLLPDALNVEHSRNAMQIQSDNLYKSDFTNWMKGIGWVPIESLEVEKAKKAGEILSEKKYRQHPEKLKFTYAMDTMEQALNKSNKLNMDKRLYTEKWNKDKTTIHVMPDTPDILLSRVNQITMSDKLYKAGWEEEKKKGYDLRPDAIAIKAARASRDIASDYKYKKAYEQAKGKHIGFRSLEDDPKLVHFMQVAKMQSDREYKKGYEKSKTSFHTPVDMLSVVAAKKSQEVATNANYRNVIHTYNMLPDAMSFELAKNMMQIQSDNQYKADYADFMKGIGWLPLGSLEAEKNKKAMEIISEKKYRQHPDTLKYSTLMDSMNMVLAQNNAKIMNEHLYKQAWEADKTKVHIMPDIPQIILAKANAINMSDKLYKLSLEESKKKGYDLRPDAIPIKAAKASRDIASDYKYKYNYEKGKGKMVGFRSLEDDPKLVHSMQVAKMQSDREYKKNYENTKTSYHTPADMLSVTAAKDAQANITNTNYKHLIHKYILLPDAMNIELTRNMNRIQSDNEYKQDYNEWYKGLGWSPAGSLEVEKAKKATEYASDQKYRQHPSNFQFKKLTDSMDMVLAKQNAHTMNKHLYTIDWNKDKTKIHVMPDTPDILQAKQNQTLYSQKLYKLGWEEALKKGYDLPVDAISVQLAKASRDIASDYKYKQGYRKQLGHHVGFRSLQDDPKLVLSMNVAKMQSEREYKKDFEKWKTKFSSPVDMLGVVLAKKCQELVSDVDYKNYLHQWTCLPDQNDVVQAKKVYELQSENLYKSDLEWLRGIGWSPLGSLEAEKNKRASEIISEKKYRQPPDRNKFTSIPDAMDIVLAKTNAKNRSDRLYREAWDKDKTQIHIMPDTPDIVLAKANLINTSDKLYRMGYEELKRKGYDLPVDAIPIKAAKASREIASEYKYKEGFRKQLGHHIGARNIEDDPKMMWSMHVAKIQSDREYKKDFEKWKTKFSSPVDMLGVVLAKKCQTLVSDVDYKNYLHQWTCLPDQSDVIHARQAYDLQSDNLYKSDLQWLKGIGWMTSGSLEDEKNKRATQILSDHVYRQHPDQFKFSSLMDSIPMVLAKNNAITMNHRLYTEAWDKDKTTVHIMPDTPEVLLAKQNKVNYSEKLYKLGLEEAKRKGYDMRVDAIPIKAAKASRDIASEFKYKEGYRKQLGHHIGARAIRDDPKMMWSMHVAKIQSDREYKKDFEKWKTKFSSPVDMLGVVLAKKCQTLVSDVDYKNYLHQWTCLPDQSDVIHARQAYDLQSDNMYKSDLQWMRGIGWVSIGSLDVEKCKRATEILSDKIYRQPPDRFKFTSVTDSLEQVLAKNNAITMNKRLYTEAWDKDKTQIHIMPDTPEIMLARMNKINYSESLYKLANEEAKKKGYDLRSDAIPIVAAKASRDIISDYKYKDGYCKQLGHHIGARNIEDDPKMMWSMHVAKIQSDREYKKDFEKWKTKFSSPVDMLGVVLAKKCQTLVSDVDYKNYLHEWTCLPDQSDVIHARQAYDLQSDNIYKSDLQWLRGIGWVPIGSMDVVKCKRATEILSDNIYRQPPDKLKFTSVTDSLEQVLAKNNALNMNKRLYTEAWDKDKTQIHIMPDTPEIMLARQNKINYSETLYKLANEEAKKKGYDLRSDAIPIVAAKASRDVISDYKYKDGYRKQLGHHIGARNIEDDPKMMWSMHVAKIQSDREYKKDFEKWKTKFSSPVDMLGVVLAKKCQTLVSDVDYKNYLHEWTCLPDQNDVIHARQAYDLQSDNIYKSDLQWLRGIGWVPIGSMDVVKCKRAAEILSDNIYRQPPDKLKFTSVTDSLEQVLAKNNALNMNKRLYTEAWDKDKTQVHIMPDTPEIMLARQNKINYSESLYRQAMEEAKKEGYDLRSDAIPIVAAKASRDIASDYKYKEAYRKQLGHHIGARAVHDDPKIMWSLHIAKVQSDREYKKDFEKYKTRYSSPVDMLGIVLAKKCQTLVSDVDYKHPLHEWICLPDQNDIIHARKAYDLQSDNLYKSDLEWMKGIGWVPIDSLEVVRAKRAGELLSDTIYRQRPETLKFTSITDTPEQVLAKNNALNMNKRLYTEAWDNDKKTIHVMPDTPEIMLAKLNRINYSDKLYKLALEESKKEGYDLRLDAIPIQAAKASRDIASDYKYKEGYRKQLGHHIGARNIKDDPKMMWSIHVAKIQSDREYKKEFEKWKTKFSSPVDMLGVVLAKKCQILVSDIDYKHPLHEWTCLPDQNDVIQARKAYDLQSDAIYKSDLEWLRGIGWVPIGSVEVEKVKRAGEILSDRKYRQPADQLKFTCITDTPEIVLAKNNALTMSKHLYTEAWDADKTSIHVMPDTPDILLAKSNSANISQKLYTKGWDESKMKDYDLRADAISIKSAKASRDIASDYKYKEAYEKQKGHHIGAQSIEDDPKIMCAIHAGKIQSEREYKKEFQKWKTKFSSPVDMLSILLAKKCQTLVTDIDYRNYLHEWTCMPDQNDIIQAKKAYDLQSDSVYKADLEWLRGIGWMPEGSVEMNRVKVAQDLVNERLYRTRPEALSFTSIVDTPEVVLAKANSLQISEKLYQEAWNKDKSNITIPSDTPEMLQAHINALQISNKLYQKDWNDAKQKGYDIRADAIEIKHAKASREIASEYKYKEGYRKQLGHHMGFRTLQDDPKSVWAIHAAKIQSDREYKKAYEKSKGIHNTPLDMMSIVQAKKCQVLVSDIDYRNYLHQWTCLPDQNDVIQAKKAYDLQSDNLYKSDLEWLKGIGWLPEGSVEVMRVKNAQNLLNERLYRIKPEALKFTSIVDTPEVIQAKINAVQISEPLYRDAWEKEKANVNVPADTPLMLQSKINALQISNKRYQQAWEDVKMTGYDLRADAIGIQHAKASRDIASDYLYKTAYEKQKGHYIGCRSAKEDPKLVWAANVLKMQNDRLYKKAYNDHKAKISIPVDMVSISAAKEGQALASDVDYRHYLHHWSCFPDQNDVIQARKAYDLQSDSVYKADLEWLRGIGWMPEGSVEMNRVKVAQDLVNERLYRTRPEALSFTSIVDTPEVVLAKANSLQISEKLYQEAWNKDKSNITIPSDTPEMLQAHINALQISNKLYQKDWNDTKQKGYDIRADAIEIKHAKASREIASEYKYKEGYRKQLGHHMGFRTLQDDPKSVWAIHAAKIQSDREYKKAYEKSKGIHNTPLDMMSIVQAKKCQVLVSDIDYRNYLHQWTCLPDQNDVIQAKKAYDLQSDNLYKSDLEWLKGIGWLPEGSVEVMRVKNAQNLLNERLYRIKPEALKFTSIVDTPEVIQAKINAVQISEPLYRNAWEKEKANVNVPADTPLMLQSKINALQISNKRYQQAWEDVKMTGYDLRADAIGIQHAKASRDIASDYLYKTAYEKQKGHYIGCRSAKEDPKLVWAANVLKMQNDRLYKKAYNDHKAKISIPVDMVSISAAKEGQALASDVDYRHYLHHWSCFPDQNDVIQARKAYDLQSDSVYKADLEWLRGIGWMPEGSVEMNRVKVAQDLVNERLYRTRPEALSFTSIVDTPEVVLAKANSLQISEKLYQEAWNKDKSNITIPSDTPEMLQAHINALQISNKLYQKDWNDTKQKGYDIRADAIEIKHAKASREIASEYKYKEGYRKQLGHHMGFRTLQDDPKSVWAIHAAKIQSDREYKKAYEKSKGIHNTPLDMMSIVQAKKCQVLVSDIDYRNYLHQWTCLPDQNDVIQAKKAYDLQSDNLYKSDLEWLKGIGWLPEGSVEVMRVKNAQNLLNERLYRIKPEALKFTSIVDTPEVIQAKINAVQISEPLYRDAWEKEKANVNVPADTPLMLQSKINALQISNKRYQQAWEDVKMTGYDLRADAIGIQHAKASRDIASDYLYKTAYEKQKGHYIGCRSAKEDPKLVWAANVLKMQNDRLYKKAYNDHKAKISIPVDMVSISAAKEGQALASDVDYRHYLHRWSCFPDQNDVIQARKAYDLQSDALYKADLEWLRGIGWMPQGSPEVLRVKNAQNIFCDSVYRTPVVNLKYTSIVDTPEVVLAKSNAENISIPKYREVWDKDKTSIHIMPDTPEINLARANALNVSNKLYREGWDEMKAGCDVRLDAIPIQAAKASREIASDYKYKLDHEKQKGHYVGTLTARDDNKIRWALIADKLQNEREYRLDWAKWKAKIQSPVDMLSILHSKNSQALVSDMDYRNYLHQWTCMPDQNDVIQAKKAYELQSDNVYKADLEWLRGIGWMPNDSVSVNHAKHAADIFSEKKYRTKIETLNFTPVDDRVDYVTAKQSGEILDDIKYRKDWNATKSKYTLTETPLLHTAQEAARILDQYLYKEGWERQKATGYILPPDAVPFVHAHHCNDVQSELKYKAEHVKQKGHYVGVPTMRDDPKLVWFEHAGQIQNERLYKEDYHKTKAKINIPADMVSVLAAKQGQTLVSDIDYRNYLHQWMCHPDQNDVIQARKAYDLQSDNVYRADLEWLRGIGWIPLDSVDHVRVTKNQEMMSQIKYKKNALENYPNFRSVVDPPEIVLAKINSVNQSDVKYKETFNKAKGKYTFSPDTPHISHSKDMGKLYSTILYKGAWEGTKAYGYTLDERYIPIVGAKHADLVNSELKYKETYEKQKGHYLAGKVIGEFPGVVHCLDFQKMRSALNYRKHYEDTKANVHIPNDMMNHVLAKRCQYILSDLEYRHYFHQWTSLLEEPNVIRVRNAQEILSDNVYKDDLNWLKGIGCYVWDTPQILHAKKSYDLQSQLQYTAAGKENLQNYNLVTDTPLYVTAVQSGINASEVKYKENYHQIKDKYTTVLETVDYDRTRNLKNLYSSNLYKEAWDRVKATSYILPSSTLSLTHAKNQKHLASHIKYREEYEKFKALYTLPRSVDDDPNTARCLRVGKLNIDRLYRSVYEKNKMKIHIVPDMVEMVTAKDSQKKVSEIDYRLRLHEWICHPDLQVNDHVRKVTDQISDIVYKDDLNWLKGIGCYVWDTPEILHAKHAYDLRDDIKYKAHMLKTRNDYKLVTDTPVYVQAVKSGKQLSDAVYHYDYVHSVRGKVAPTTKTVDLDRALHAYKLQSSNLYKTSLRTLPTGYRLPGDTPHFKHIKDTRYMSSYFKYKEAYEHTKAYGYTLGPKDVPFVHVRRVNNVTSERLYRELYHKLKDKIHTTPDTPEIRQVKKTQEAVSELIYKSDFFKMQGHMISLPYTPQVIHCRYVGDITSDIKYKEDLQVLKGFGCFLYDTPDMVRSRHLRKLWSNYLYTDKARKMRDKYKVVLDTPEYRKVQELKTHLSELVYRAAGKKQKSIFTSVPDTPDLLRAKRGQKLQSQYLYVELATKERPHHHAGNQTTALKHAKDVKDMVSEKKYKIQYEKMKDKYTPVPDTPILIRAKRAYWNASDLRYKETFQKTKGKYHTVKDALDIVYHRKVTDDISKIKYKENYMSQLGIWRSIPDRPEHFHHRAVTDTVSDVKYKEDLTWLKGIGCYAYDTPDFTLAEKNKTLYSKYKYKEVFERTKSDFKYVADSPINRHFKYATQLMNERKYKSSAKMFLQHGCNEILRPDMLTALYNSHMWSQIKYRKNYEKSKDKFTSIVDTPEHLRTTKVNKQISDILYKLEYNKAKPRGYTTIHDTPMLLHVRKVKDEVSDLKYKEVYQRNKSNCTIEPDAVHIKAAKDAYKVNTNLDYKKQYEANKAHWKWTPDRPDFLQAAKSSLQQSDFEYKLDREFLKGCKLSVTDDKNTVLALRNTLIESDLKYKEKHVKERGTCHAVPDTPQILLAKTVSNLVSENKYKDHVKKHLAQGSYTTLPETRDTVHVKEVTKHVSDTNYKKKFVKEKGKSNYSIMLEPPEVKHAMEVAKKQSDVAYRKDAKENLHYTTVADRPDIKKATQAAKQASEVEYRAKHRKEGSHGLSMLGRPDIEMAKKAAKLSSQVKYRENFDKEKGKTPKYNPKDSQLYKVMKDANNLASEVKYKADLKKLHKPVTDMKESLIMNHVLNTSQLASSYQYKKKYEKSKGHYHTIPDNLEQLHLKEATELQSIVKYKEKYEKERGKPMLDFETPTYITAKESQQMQSGKEYRKDYEESIKGRNLTGLEVTPALLHVKYATKIASEKEYRKDLEESIRGKGLTEMEDTPDMLRAKNATQILNEKEYKRDLELEVKGRGLNAMANETPDFMRARNATDIASQIKYKQSAEMEKANFTSVVDTPEIIHAQQVKNLSSQKKYKEDAEKSMSYYETVLDTPEIQRVRENQKNFSLLQYQCDLKNSKGKITVVQDTPEILRVKENQKNFSSVLYKEDVSPGTAIGKTPEMMRVKQTQDHISSVKYKEAIGQGTPIPDLPEVKRVKETQKHISSVMYKENLGTGIPTTVTPEIERVKRNQENFSSVLYKENLGKGIPTPITPEMERVKRNQENFSSILYKENLSKGTPLPVTPEMERVKLNQENFSSVLYKENVGKGIPIPITPEMERVKHNQENFSSVLYKENLGTGIPIPITPEMQRVKHNQENLSSVLYKENMGKGTPLPVTPEMERVKHNQENISSVLYKENMGKGTPLPVTPEMERVKHNQENISSVLYKENMGKGTPLAVTPEMERVKHNQENISSVLYKENVGKATATPVTPEMQRVKRNQENISSVLYKENLGKATPTPFTPEMERVKRNQENFSSVLYKENMRKATPTPVTPEMERAKRNQENISSVLYSDSFRKQIQGKAAYVLDTPEMRRVRETQRHISTVKYHEDFEKHKGCFTPVVTDPITERVKKNMQDFSDINYRGIQRKVVEMEQKRNDQDQETITGLRVWRTNPGSVFDYDPAEDNIQSRSLHMINVQAQRRSREQSRSASALSISGGEEKSEHSEAPDHHLSTYSDGGVFAVSTAYKHAKTTELPQQRSSSVATQQTTVSSIPSHPSTAGKIFRAMYDYMAADADEVSFKDGDAIINVQAIDEGWMYGTVQRTGRTGMLPANYVEAI.

A disordered region spans residues 34–70 (TTTTRTSDYEQSETSKPALAQPALAQPASAKPVERRK). Residues 48-64 (SKPALAQPALAQPASAK) show a composition bias toward low complexity. Nebulin repeat units follow at residues 83 to 110 (TPYIAHSQKMQDLFSPNKYKEKFEKTKG), 112 to 146 (PYASTTDTPELRRIKKVQDQLSEVKYRMDGDVAKT), 156 to 181 (DIEHAKKVSQQVSKVLYKQNWEDTKD), 182 to 216 (KYLLPPDAPELVQAVKNTAMFSKKLYTEDWEADKS), 217 to 251 (LFYPYNDSPELRRVAQAQKALSDVAYKKGLAEQQA), 252 to 286 (QFTPLADPPDIEFAKKVTNQVSKQKYKEDYENKIK), 296 to 321 (EVANARMNADNISTRKYQEDFENMKD), 323 to 357 (IYFMQTETPEYKMNKKAGVAASKVKYKEDYEKNKG), 362 to 396 (NVLPASENPQLRQLKAAGDALSDKLYKENYEKTKA), 403 to 431 (ETPKFKLDTVLQNFSSDKKYKDSYLKDIL), 433 to 467 (HYVGSFEDPYHSHCMKVTAQNSDKNYKAEYEEDRG), 501 to 535 (KFTQVTDSPVLLQAQVNSKQLSDLNYKAKHESEKF), 536 to 570 (KCHIPPDTPAFIQHKVNAYNLSDNLYKQDWEKSKA), 572 to 606 (KFDIKVDAIPLLAAKANTKNTSDVMYKKDYEKNKG), 610 to 644 (GVLSINDDPKMLHSLKVAKNQSDRLYKENYEKTKA), 680 to 714 (HYVGSMEDPYHTHCMKVAAQNSDKSYKAEYEEDKG), 748 to 782 (KFTAVTDSPVLLQAQLNTKQLSDLNYKAKHEGEKF), 783 to 817 (KCHIPADAPQFIQHRVNAYNLSDNVYKQDWEKSKA), 819 to 853 (KFDIKVDAIPLLAAKANTKNTSDVMYKKDYEKSKG), 857 to 891 (GALSINDDPKMLHSLKTAKNQSDREYRKDYEKSKT), 892 to 918 (IYTAPLDMLQVTQAKKSQAIASDVDYK), 923 to 957 (SYSYPPDSINVDLAKKAYALQSDVEYKADYNSWMK), 968 to 986 (EMEKAKRASDILNEKKYRQ), 992 to 1026 (KFTSIEDAPITVQSKINQAQRSDIAYKAKGEEIIH), 1027 to 1061 (KYNLPPDLPQFIQAKVNAYNISENMYKADLKDLSK), 1063 to 1097 (GYDLRTDAIPIRAAKAARQAASDVQYKKDYEKAKG), 1101 to 1135 (GFQSLQDDPKLVHYMNVAKIQSDREYKKDYEKTKS), 1136 to 1166 (KYNTPHDMFNVVAAKKAQDVVSNVNYKHSLH), 1167 to 1201 (HYTYLPDAMDLELSKNMMQIQSDNVYKEDYNNWMK), 1212 to 1230 (DVEKVKKAGDALNEKKYRQ), 1236 to 1270 (KFTSIVDSPVMVQAKQNTKQVSDILYKAKGEDVKH), 1271 to 1305 (KYTMSPDLPQFLQAKCNAYNISDVCYKRDWYDLIA), 1307 to 1341 (GNNVLGDAIPITAAKASRNIASDYKYKEAYEKSKG), 1345 to 1379 (GFRSLQDDPKLVHYMNVAKLQSDREYKKNYENTKT), 1380 to 1407 (SYHTPGDMVSITAAKMAQDVATNVNYKQ), 1411 to 1445 (HYTYLPDAMSLEHTRNVNQIQSDNVYKDEYNSFLK), 1456 to 1474 (EVEKVKKAGDALNERKYRQ), 1480 to 1514 (KFTSVPDSMGMVLAQHNTKQLSDLNYKVEGEKLKH), 1515 to 1549 (KYTIDPELPQFIQAKVNALNMSDAHYKADWKKTIA), 1551 to 1585 (GYDLRPDAIPIVAAKSSRNIASDCKYKEAYEKAKG), 1589 to 1623 (GFLSLQDDPKLVHYMNVAKIQSDREYKKGYEASKT), 1624 to 1654 (KYHTPLDMVSVTAAKKSQEVATNANYRQSYH), 1655 to 1689 (HYTLLPDALNVEHSRNAMQIQSDNLYKSDFTNWMK), 1697 to 1725 (ESLEVEKAKKAGEILSEKKYRQHPEKLKF), 1730 to 1758 (DTMEQALNKSNKLNMDKRLYTEKWNKDKT), 1759 to 1793 (TIHVMPDTPDILLSRVNQITMSDKLYKAGWEEEKK), 1795 to 1829 (GYDLRPDAIAIKAARASRDIASDYKYKKAYEQAKG), 1833 to 1867 (GFRSLEDDPKLVHFMQVAKMQSDREYKKGYEKSKT), 1868 to 1894 (SFHTPVDMLSVVAAKKSQEVATNANYR), 1899 to 1933 (TYNMLPDAMSFELAKNMMQIQSDNQYKADYADFMK), 1949 to 1962 (KKAMEIISEKKYRQ), 1968 to 2002 (KYSTLMDSMNMVLAQNNAKIMNEHLYKQAWEADKT), 2003 to 2037 (KVHIMPDIPQIILAKANAINMSDKLYKLSLEESKK), 2039 to 2073 (GYDLRPDAIPIKAAKASRDIASDYKYKYNYEKGKG), 2077 to 2111 (GFRSLEDDPKLVHSMQVAKMQSDREYKKNYENTKT), 2112 to 2138 (SYHTPADMLSVTAAKDAQANITNTNYK), 2143 to 2177 (KYILLPDAMNIELTRNMNRIQSDNEYKQDYNEWYK), 2188 to 2206 (EVEKAKKATEYASDQKYRQ), 2212 to 2246 (QFKKLTDSMDMVLAKQNAHTMNKHLYTIDWNKDKT), 2247 to 2281 (KIHVMPDTPDILQAKQNQTLYSQKLYKLGWEEALK), 2283 to 2317 (GYDLPVDAISVQLAKASRDIASDYKYKQGYRKQLG), 2321 to 2355 (GFRSLQDDPKLVLSMNVAKMQSEREYKKDFEKWKT), 2356 to 2382 (KFSSPVDMLGVVLAKKCQELVSDVDYK), 2387 to 2421 (QWTCLPDQNDVVQAKKVYELQSENLYKSDLEWLRG), 2436 to 2449 (KRASEIISEKKYRQ), 2455 to 2489 (KFTSIPDAMDIVLAKTNAKNRSDRLYREAWDKDKT), 2490 to 2524 (QIHIMPDTPDIVLAKANLINTSDKLYRMGYEELKR), 2526 to 2560 (GYDLPVDAIPIKAAKASREIASEYKYKEGFRKQLG), 2564 to 2598 (GARNIEDDPKMMWSMHVAKIQSDREYKKDFEKWKT), 2599 to 2625 (KFSSPVDMLGVVLAKKCQTLVSDVDYK), 2630 to 2664 (QWTCLPDQSDVIHARQAYDLQSDNLYKSDLQWLKG), 2679 to 2692 (KRATQILSDHVYRQ), 2698 to 2732 (KFSSLMDSIPMVLAKNNAITMNHRLYTEAWDKDKT), 2733 to 2767 (TVHIMPDTPEVLLAKQNKVNYSEKLYKLGLEEAKR), 2769 to 2803 (GYDMRVDAIPIKAAKASRDIASEFKYKEGYRKQLG), 2807 to 2841 (GARAIRDDPKMMWSMHVAKIQSDREYKKDFEKWKT), 2842 to 2868 (KFSSPVDMLGVVLAKKCQTLVSDVDYK), 2873 to 2907 (QWTCLPDQSDVIHARQAYDLQSDNMYKSDLQWMRG), 2917 to 2935 (DVEKCKRATEILSDKIYRQ), 2941 to 2975 (KFTSVTDSLEQVLAKNNAITMNKRLYTEAWDKDKT), 2976 to 3010 (QIHIMPDTPEIMLARMNKINYSESLYKLANEEAKK), 3012 to 3046 (GYDLRSDAIPIVAAKASRDIISDYKYKDGYCKQLG), 3050 to 3084 (GARNIEDDPKMMWSMHVAKIQSDREYKKDFEKWKT), 3085 to 3111 (KFSSPVDMLGVVLAKKCQTLVSDVDYK), 3116 to 3150 (EWTCLPDQSDVIHARQAYDLQSDNIYKSDLQWLRG), 3158 to 3178 (SMDVVKCKRATEILSDNIYRQ), 3184 to 3218 (KFTSVTDSLEQVLAKNNALNMNKRLYTEAWDKDKT), 3219 to 3253 (QIHIMPDTPEIMLARQNKINYSETLYKLANEEAKK), 3255 to 3289 (GYDLRSDAIPIVAAKASRDVISDYKYKDGYRKQLG), 3293 to 3327 (GARNIEDDPKMMWSMHVAKIQSDREYKKDFEKWKT), 3328 to 3354 (KFSSPVDMLGVVLAKKCQTLVSDVDYK), 3359 to 3393 (EWTCLPDQNDVIHARQAYDLQSDNIYKSDLQWLRG), 3401 to 3421 (SMDVVKCKRAAEILSDNIYRQ), 3427 to 3461 (KFTSVTDSLEQVLAKNNALNMNKRLYTEAWDKDKT), 3462 to 3496 (QVHIMPDTPEIMLARQNKINYSESLYRQAMEEAKK), 3498 to 3532 (GYDLRSDAIPIVAAKASRDIASDYKYKEAYRKQLG), 3536 to 3570 (GARAVHDDPKIMWSLHIAKVQSDREYKKDFEKYKT), 3571 to 3597 (RYSSPVDMLGIVLAKKCQTLVSDVDYK), 3602 to 3636 (EWICLPDQNDIIHARKAYDLQSDNLYKSDLEWMKG), 3643 to 3664 (DSLEVVRAKRAGELLSDTIYRQ), 3670 to 3704 (KFTSITDTPEQVLAKNNALNMNKRLYTEAWDNDKK), 3705 to 3739 (TIHVMPDTPEIMLAKLNRINYSDKLYKLALEESKK), 3741 to 3775 (GYDLRLDAIPIQAAKASRDIASDYKYKEGYRKQLG), 3779 to 3813 (GARNIKDDPKMMWSIHVAKIQSDREYKKEFEKWKT), 3814 to 3840 (KFSSPVDMLGVVLAKKCQILVSDIDYK), 3845 to 3879 (EWTCLPDQNDVIQARKAYDLQSDAIYKSDLEWLRG), 3889 to 3907 (EVEKVKRAGEILSDRKYRQ), 3913 to 3947 (KFTCITDTPEIVLAKNNALTMSKHLYTEAWDADKT), 3948 to 3982 (SIHVMPDTPDILLAKSNSANISQKLYTKGWDESKM), 3984 to 4018 (DYDLRADAISIKSAKASRDIASDYKYKEAYEKQKG), 4022 to 4056 (GAQSIEDDPKIMCAIHAGKIQSEREYKKEFQKWKT), 4057 to 4083 (KFSSPVDMLSILLAKKCQTLVTDIDYR), 4088 to 4122 (EWTCMPDQNDIIQAKKAYDLQSDSVYKADLEWLRG), 4132 to 4149 (EMNRVKVAQDLVNERLYR), 4156 to 4190 (SFTSIVDTPEVVLAKANSLQISEKLYQEAWNKDKS), 4191 to 4225 (NITIPSDTPEMLQAHINALQISNKLYQKDWNDAKQ), 4227 to 4261 (GYDIRADAIEIKHAKASREIASEYKYKEGYRKQLG), 4265 to 4299 (GFRTLQDDPKSVWAIHAAKIQSDREYKKAYEKSKG), 4300 to 4326 (IHNTPLDMMSIVQAKKCQVLVSDIDYR), 4331 to 4365 (QWTCLPDQNDVIQAKKAYDLQSDNLYKSDLEWLKG), 4375 to 4392 (EVMRVKNAQNLLNERLYR), 4399 to 4433 (KFTSIVDTPEVIQAKINAVQISEPLYRDAWEKEKA), 4434 to 4468 (NVNVPADTPLMLQSKINALQISNKRYQQAWEDVKM), 4470 to 4504 (GYDLRADAIGIQHAKASRDIASDYLYKTAYEKQKG), 4508 to 4542 (GCRSAKEDPKLVWAANVLKMQNDRLYKKAYNDHKA), 4543 to 4569 (KISIPVDMVSISAAKEGQALASDVDYR), 4574 to 4608 (HWSCFPDQNDVIQARKAYDLQSDSVYKADLEWLRG), 4618 to 4635 (EMNRVKVAQDLVNERLYR), 4642 to 4676 (SFTSIVDTPEVVLAKANSLQISEKLYQEAWNKDKS), 4677 to 4711 (NITIPSDTPEMLQAHINALQISNKLYQKDWNDTKQ), 4713 to 4747 (GYDIRADAIEIKHAKASREIASEYKYKEGYRKQLG), 4751 to 4785 (GFRTLQDDPKSVWAIHAAKIQSDREYKKAYEKSKG), 4786 to 4812 (IHNTPLDMMSIVQAKKCQVLVSDIDYR), 4817 to 4851 (QWTCLPDQNDVIQAKKAYDLQSDNLYKSDLEWLKG), 4861 to 4878 (EVMRVKNAQNLLNERLYR), 4885 to 4919 (KFTSIVDTPEVIQAKINAVQISEPLYRNAWEKEKA), 4920 to 4954 (NVNVPADTPLMLQSKINALQISNKRYQQAWEDVKM), 4956 to 4990 (GYDLRADAIGIQHAKASRDIASDYLYKTAYEKQKG), 4994 to 5028 (GCRSAKEDPKLVWAANVLKMQNDRLYKKAYNDHKA), 5029 to 5055 (KISIPVDMVSISAAKEGQALASDVDYR), 5060 to 5094 (HWSCFPDQNDVIQARKAYDLQSDSVYKADLEWLRG), 5104 to 5121 (EMNRVKVAQDLVNERLYR), 5128 to 5162 (SFTSIVDTPEVVLAKANSLQISEKLYQEAWNKDKS), 5163 to 5197 (NITIPSDTPEMLQAHINALQISNKLYQKDWNDTKQ), 5199 to 5233 (GYDIRADAIEIKHAKASREIASEYKYKEGYRKQLG), 5237 to 5271 (GFRTLQDDPKSVWAIHAAKIQSDREYKKAYEKSKG), 5272 to 5298 (IHNTPLDMMSIVQAKKCQVLVSDIDYR), 5303 to 5337 (QWTCLPDQNDVIQAKKAYDLQSDNLYKSDLEWLKG), 5347 to 5364 (EVMRVKNAQNLLNERLYR), 5371 to 5405 (KFTSIVDTPEVIQAKINAVQISEPLYRDAWEKEKA), 5406 to 5440 (NVNVPADTPLMLQSKINALQISNKRYQQAWEDVKM), 5442 to 5476 (GYDLRADAIGIQHAKASRDIASDYLYKTAYEKQKG), 5480 to 5514 (GCRSAKEDPKLVWAANVLKMQNDRLYKKAYNDHKA), 5515 to 5541 (KISIPVDMVSISAAKEGQALASDVDYR), 5546 to 5580 (RWSCFPDQNDVIQARKAYDLQSDALYKADLEWLRG), 5588 to 5607 (SPEVLRVKNAQNIFCDSVYR), 5614 to 5648 (KYTSIVDTPEVVLAKSNAENISIPKYREVWDKDKT), 5649 to 5683 (SIHIMPDTPEINLARANALNVSNKLYREGWDEMKA), 5690 to 5718 (DAIPIQAAKASREIASDYKYKLDHEKQKG), 5722 to 5756 (GTLTARDDNKIRWALIADKLQNEREYRLDWAKWKA), 5757 to 5783 (KIQSPVDMLSILHSKNSQALVSDMDYR), 5788 to 5822 (QWTCMPDQNDVIQAKKAYELQSDNVYKADLEWLRG), 5829 to 5853 (DSVSVNHAKHAADIFSEKKYRTKIE), 5856 to 5890 (NFTPVDDRVDYVTAKQSGEILDDIKYRKDWNATKS), 5893 to 5924 (TLTETPLLHTAQEAARILDQYLYKEGWERQKA), 5926 to 5960 (GYILPPDAVPFVHAHHCNDVQSELKYKAEHVKQKG), 5964 to 5998 (GVPTMRDDPKLVWFEHAGQIQNERLYKEDYHKTKA), 5999 to 6025 (KINIPADMVSVLAAKQGQTLVSDIDYR), 6030 to 6064 (QWMCHPDQNDVIQARKAYDLQSDNVYRADLEWLRG), 6071 to 6099 (DSVDHVRVTKNQEMMSQIKYKKNALENYP), 6100 to 6134 (NFRSVVDPPEIVLAKINSVNQSDVKYKETFNKAKG), 6135 to 6169 (KYTFSPDTPHISHSKDMGKLYSTILYKGAWEGTKA), 6171 to 6205 (GYTLDERYIPIVGAKHADLVNSELKYKETYEKQKG), 6209 to 6243 (AGKVIGEFPGVVHCLDFQKMRSALNYRKHYEDTKA), 6244 to 6274 (NVHIPNDMMNHVLAKRCQYILSDLEYRHYFH), 6275 to 6309 (QWTSLLEEPNVIRVRNAQEILSDNVYKDDLNWLKG), 6316 to 6344 (DTPQILHAKKSYDLQSQLQYTAAGKENLQ), 6345 to 6379 (NYNLVTDTPLYVTAVQSGINASEVKYKENYHQIKD), 6380 to 6414 (KYTTVLETVDYDRTRNLKNLYSSNLYKEAWDRVKA), 6416 to 6450 (SYILPSSTLSLTHAKNQKHLASHIKYREEYEKFKA), 6458 to 6488 (VDDDPNTARCLRVGKLNIDRLYRSVYEKNKM), 6489 to 6515 (KIHIVPDMVEMVTAKDSQKKVSEIDYR), 6532 to 6554 (HVRKVTDQISDIVYKDDLNWLKG), 6561 to 6589 (DTPEILHAKHAYDLRDDIKYKAHMLKTRN), 6590 to 6624 (DYKLVTDTPVYVQAVKSGKQLSDAVYHYDYVHSVR), 6626 to 6660 (KVAPTTKTVDLDRALHAYKLQSSNLYKTSLRTLPT), 6661 to 6695 (GYRLPGDTPHFKHIKDTRYMSSYFKYKEAYEHTKA), 6697 to 6731 (GYTLGPKDVPFVHVRRVNNVTSERLYRELYHKLKD), 6732 to 6766 (KIHTTPDTPEIRQVKKTQEAVSELIYKSDFFKMQG), 6767 to 6801 (HMISLPYTPQVIHCRYVGDITSDIKYKEDLQVLKG), 6808 to 6836 (DTPDMVRSRHLRKLWSNYLYTDKARKMRD), 6837 to 6871 (KYKVVLDTPEYRKVQELKTHLSELVYRAAGKKQKS), 6872 to 6906 (IFTSVPDTPDLLRAKRGQKLQSQYLYVELATKERP), 6907 to 6941 (HHHAGNQTTALKHAKDVKDMVSEKKYKIQYEKMKD), 6942 to 6976 (KYTPVPDTPILIRAKRAYWNASDLRYKETFQKTKG), 6977 to 7011 (KYHTVKDALDIVYHRKVTDDISKIKYKENYMSQLG), 7012 to 7046 (IWRSIPDRPEHFHHRAVTDTVSDVKYKEDLTWLKG), 7053 to 7081 (DTPDFTLAEKNKTLYSKYKYKEVFERTKS), 7082 to 7110 (DFKYVADSPINRHFKYATQLMNERKYKSS), 7125 to 7151 (PDMLTALYNSHMWSQIKYRKNYEKSKD), 7152 to 7186 (KFTSIVDTPEHLRTTKVNKQISDILYKLEYNKAKP), 7188 to 7222 (GYTTIHDTPMLLHVRKVKDEVSDLKYKEVYQRNKS), 7223 to 7257 (NCTIEPDAVHIKAAKDAYKVNTNLDYKKQYEANKA), 7258 to 7292 (HWKWTPDRPDFLQAAKSSLQQSDFEYKLDREFLKG), 7297 to 7327 (VTDDKNTVLALRNTLIESDLKYKEKHVKERG), 7328 to 7362 (TCHAVPDTPQILLAKTVSNLVSENKYKDHVKKHLA), 7365 to 7399 (SYTTLPETRDTVHVKEVTKHVSDTNYKKKFVKEKG), 7402 to 7433 (NYSIMLEPPEVKHAMEVAKKQSDVAYRKDAKE), 7436 to 7470 (HYTTVADRPDIKKATQAAKQASEVEYRAKHRKEGS), 7479 to 7505 (PDIEMAKKAAKLSSQVKYRENFDKEKG), 7514 to 7542 (DSQLYKVMKDANNLASEVKYKADLKKLHK), 7543 to 7577 (PVTDMKESLIMNHVLNTSQLASSYQYKKKYEKSKG), 7578 to 7612 (HYHTIPDNLEQLHLKEATELQSIVKYKEKYEKERG), 7619 to 7647 (ETPTYITAKESQQMQSGKEYRKDYEESIK), 7650 to 7684 (NLTGLEVTPALLHVKYATKIASEKEYRKDLEESIR), 7687 to 7721 (GLTEMEDTPDMLRAKNATQILNEKEYKRDLELEVK), 7731 to 7759 (ETPDFMRARNATDIASQIKYKQSAEMEKA), 7760 to 7794 (NFTSVVDTPEIIHAQQVKNLSSQKKYKEDAEKSMS), 7795 to 7829 (YYETVLDTPEIQRVRENQKNFSLLQYQCDLKNSKG), 7830 to 7864 (KITVVQDTPEILRVKENQKNFSSVLYKEDVSPGTA), 7867 to 7888 (KTPEMMRVKQTQDHISSVKYKE), 7892 to 7921 (QGTPIPDLPEVKRVKETQKHISSVMYKENL), 7930 to 7957 (TPEIERVKRNQENFSSVLYKENLGKGIP), 7961 to 7988 (TPEMERVKRNQENFSSILYKENLSKGTP), 7992 to 8013 (TPEMERVKLNQENFSSVLYKEN), 8016 to 8045 (KGIPIPITPEMERVKHNQENFSSVLYKENL), 8054 to 8075 (TPEMQRVKHNQENLSSVLYKEN), 8078 to 8112 (KGTPLPVTPEMERVKHNQENISSVLYKENMGKGTP), 8116 to 8143 (TPEMERVKHNQENISSVLYKENMGKGTP), 8147 to 8168 (TPEMERVKHNQENISSVLYKEN), 8171 to 8205 (KATATPVTPEMQRVKRNQENISSVLYKENLGKATP), 8209 to 8232 (TPEMERVKRNQENFSSVLYKENMR), 8233 to 8267 (KATPTPVTPEMERAKRNQENISSVLYSDSFRKQIQ), 8269 to 8303 (KAAYVLDTPEMRRVRETQRHISTVKYHEDFEKHKG), and 8304 to 8330 (CFTPVVTDPITERVKKNMQDFSDINYR). Positions 8313–8468 (ITERVKKNMQ…SIPSHPSTAG (156 aa)) are interaction with SVIL. Disordered regions lie at residues 8385-8422 (QAQRRSREQSRSASALSISGGEEKSEHSEAPDHHLSTY) and 8439-8463 (TTELPQQRSSSVATQQTTVSSIPSH). Positions 8405–8419 (GEEKSEHSEAPDHHL) are enriched in basic and acidic residues. The span at 8444–8459 (QQRSSSVATQQTTVSS) shows a compositional bias: low complexity. The 60-residue stretch at 8466 to 8525 (TAGKIFRAMYDYMAADADEVSFKDGDAIINVQAIDEGWMYGTVQRTGRTGMLPANYVEAI) folds into the SH3 domain.

In terms of assembly, monomer and homooligomer. Interacts with TTN/titin. Interacts with SVIL. Interacts (via nebulin repeats 160-164) with DES. Expressed in skeletal muscle (at protein level). Located in the thin filament of striated muscle.

Its subcellular location is the cytoplasm. The protein resides in the myofibril. It is found in the sarcomere. It localises to the cytoskeleton. Its function is as follows. This giant muscle protein may be involved in maintaining the structural integrity of sarcomeres and the membrane system associated with the myofibrils. Binds and stabilize F-actin. In Homo sapiens (Human), this protein is Nebulin (NEB).